The sequence spans 299 residues: Probable lipid kinase YegS (299 aa).

Positions 2–133 (ANFPASLLIL…IDMAMVNDKT (132 aa)) constitute a DAGKc domain. Residues Thr40, 66–72 (GDGTINE), and Thr95 each bind ATP. The Mg(2+) site is built by Leu215, Asp218, and Leu220. Glu271 functions as the Proton acceptor in the catalytic mechanism.

Belongs to the diacylglycerol/lipid kinase family. YegS lipid kinase subfamily. The cofactor is Mg(2+). Ca(2+) is required as a cofactor.

The protein localises to the cytoplasm. Its function is as follows. Probably phosphorylates lipids; the in vivo substrate is unknown. The polypeptide is Probable lipid kinase YegS (Salmonella choleraesuis (strain SC-B67)).